Here is a 348-residue protein sequence, read N- to C-terminus: MAAVPDRERALDLALAQIDKQFGKGSVMRLGERPVVETAVVPTGSIALDVALGVGGLPRGRVIEVYGPESSGKTTVALHAVANAQRSGGIAAFVDAEHALDPEYARALGVDTDALLVSQPDTGEQALEIADMLVRSGALDIIVIDSVAALVPRAEIEGEMGDSHVGLQARLMSQALRKMTGVLSHTGTTAVFINQLREKIGVMFGSPETTTGGRALKFYASVRLDVRRIESLKDGTDVVGNRTRVKVVKNKVAAPFKQAEFDIMYGKGISREGSLIDVGVEQAIIRKSGAWYTYEGDQLGQGKEKAREFLRENPDVAAEIEKKILEKLGVGAGAGDAAGGPELPPVDF.

ATP is bound at residue 67 to 74 (GPESSGKT).

Belongs to the RecA family.

It is found in the cytoplasm. Functionally, can catalyze the hydrolysis of ATP in the presence of single-stranded DNA, the ATP-dependent uptake of single-stranded DNA by duplex DNA, and the ATP-dependent hybridization of homologous single-stranded DNAs. It interacts with LexA causing its activation and leading to its autocatalytic cleavage. This chain is Protein RecA, found in Salinispora tropica (strain ATCC BAA-916 / DSM 44818 / JCM 13857 / NBRC 105044 / CNB-440).